Consider the following 247-residue polypeptide: MMMSSRSSVSLGVLLLLAVILSAGAADPDILTDFVVPSDTDPSGIDGAFFTYKNLVTGNSGDPAKLTVTKATHAEFPALLGQSVSYAALVFGAGTVNPPHIHPRASELLVVVQGPLLVGLVDAARNGTVYTQTLQTGDMFVFPKGMVHFQFNNGTDVVARAFSAFGSATPGTISLPAALFGSGIDDTILDKSMHTDQATVDQLKQDQAPPSPRPSPGSSSSAAAALLPSRWAITLLLCFAASYYFYF.

Residues 1 to 25 (MMMSSRSSVSLGVLLLLAVILSAGA) form the signal peptide. One can recognise a Cupin type-1 domain in the interval 53–201 (KNLVTGNSGD…SMHTDQATVD (149 aa)). Positions 100, 102, and 107 each coordinate Mn(2+). Asparagine 126 carries N-linked (GlcNAc...) asparagine glycosylation. Position 148 (histidine 148) interacts with Mn(2+). N-linked (GlcNAc...) asparagine glycosylation occurs at asparagine 153.

The protein belongs to the germin family. As to quaternary structure, oligomer (believed to be a pentamer but probably hexamer).

It localises to the secreted. Its subcellular location is the extracellular space. The protein localises to the apoplast. Its function is as follows. May play a role in plant defense. Probably has no oxalate oxidase activity even if the active site is conserved. The chain is Germin-like protein 9-1 from Oryza sativa subsp. japonica (Rice).